A 309-amino-acid chain; its full sequence is Probable 2,4-dienoyl-CoA reductase decr-1.2 [(3E)-enoyl-CoA-producing] (309 aa).

NADP(+) is bound by residues 28 to 60 (VLVTGGGTGIGKAIATTFAHLRATVVIAARRME), 32 to 37 (GGGTGI), arginine 57, and aspartate 83. Residue arginine 57 coordinates substrate. Phenylalanine 116 and serine 124 together coordinate substrate. The Proton acceptor role is filled by tyrosine 166. NADP(+) is bound by residues lysine 181 and 207–210 (PGPI). Position 218 (arginine 218) interacts with substrate.

This sequence belongs to the short-chain dehydrogenases/reductases (SDR) family. 2,4-dienoyl-CoA reductase subfamily.

The enzyme catalyses a (2E,4E)-dienoyl-CoA + NADPH + H(+) = a 4,5-saturated-(3E)-enoyl-CoA + NADP(+). It catalyses the reaction a (2E,4Z)-dienoyl-CoA + NADPH + H(+) = a 4,5-saturated-(3E)-enoyl-CoA + NADP(+). Auxiliary enzyme of beta-oxidation. It participates in the metabolism of unsaturated fatty enoyl-CoA esters having double bonds in both even- and odd-numbered positions. Catalyzes the NADP-dependent reduction of 2,4-dienoyl-CoA to yield trans-3-enoyl-CoA. This Caenorhabditis elegans protein is Probable 2,4-dienoyl-CoA reductase decr-1.2 [(3E)-enoyl-CoA-producing].